The following is a 595-amino-acid chain: Elongation factor 4 (595 aa).

The tr-type G domain occupies 2–183 (KNIRNFCIIA…AIVEQVPAPA (182 aa)). Residues 14–19 (DHGKST) and 130–133 (NKVD) each bind GTP.

This sequence belongs to the TRAFAC class translation factor GTPase superfamily. Classic translation factor GTPase family. LepA subfamily.

It localises to the cell inner membrane. The enzyme catalyses GTP + H2O = GDP + phosphate + H(+). Required for accurate and efficient protein synthesis under certain stress conditions. May act as a fidelity factor of the translation reaction, by catalyzing a one-codon backward translocation of tRNAs on improperly translocated ribosomes. Back-translocation proceeds from a post-translocation (POST) complex to a pre-translocation (PRE) complex, thus giving elongation factor G a second chance to translocate the tRNAs correctly. Binds to ribosomes in a GTP-dependent manner. The polypeptide is Elongation factor 4 (Porphyromonas gingivalis (strain ATCC 33277 / DSM 20709 / CIP 103683 / JCM 12257 / NCTC 11834 / 2561)).